Consider the following 387-residue polypeptide: 1-deoxy-D-xylulose 5-phosphate reductoisomerase (387 aa).

NADPH contacts are provided by Thr-10, Gly-11, Ile-13, Asn-38, and Asn-122. Residue Lys-123 coordinates 1-deoxy-D-xylulose 5-phosphate. Glu-124 is an NADPH binding site. Asp-148 serves as a coordination point for Mn(2+). 1-deoxy-D-xylulose 5-phosphate-binding residues include Ser-149, Glu-150, Ser-174, and His-197. A Mn(2+)-binding site is contributed by Glu-150. An NADPH-binding site is contributed by Gly-203. The 1-deoxy-D-xylulose 5-phosphate site is built by Ser-210, Asn-215, Lys-216, and Glu-219. Glu-219 is a Mn(2+) binding site.

The protein belongs to the DXR family. Mg(2+) serves as cofactor. Requires Mn(2+) as cofactor.

It carries out the reaction 2-C-methyl-D-erythritol 4-phosphate + NADP(+) = 1-deoxy-D-xylulose 5-phosphate + NADPH + H(+). It participates in isoprenoid biosynthesis; isopentenyl diphosphate biosynthesis via DXP pathway; isopentenyl diphosphate from 1-deoxy-D-xylulose 5-phosphate: step 1/6. In terms of biological role, catalyzes the NADPH-dependent rearrangement and reduction of 1-deoxy-D-xylulose-5-phosphate (DXP) to 2-C-methyl-D-erythritol 4-phosphate (MEP). The polypeptide is 1-deoxy-D-xylulose 5-phosphate reductoisomerase (Ehrlichia ruminantium (strain Welgevonden)).